The primary structure comprises 199 residues: Elongation factor Ts (199 aa).

Residues 81 to 84 (TDFV) are involved in Mg(2+) ion dislocation from EF-Tu.

This sequence belongs to the EF-Ts family.

Its subcellular location is the cytoplasm. Its function is as follows. Associates with the EF-Tu.GDP complex and induces the exchange of GDP to GTP. It remains bound to the aminoacyl-tRNA.EF-Tu.GTP complex up to the GTP hydrolysis stage on the ribosome. In Thermotoga petrophila (strain ATCC BAA-488 / DSM 13995 / JCM 10881 / RKU-1), this protein is Elongation factor Ts.